Consider the following 78-residue polypeptide: Large ribosomal subunit protein bL28 (78 aa).

Positions 1-24 (MSKVCQVTGKRPASGNNVSHAHNK) are disordered.

The protein belongs to the bacterial ribosomal protein bL28 family.

The polypeptide is Large ribosomal subunit protein bL28 (Nitrosococcus oceani (strain ATCC 19707 / BCRC 17464 / JCM 30415 / NCIMB 11848 / C-107)).